The sequence spans 412 residues: Transforming growth factor beta-3 proprotein (412 aa).

Residues 1–23 (MKMHLQRALVVLALLNFATVSLS) form the signal peptide. Residues N74, N135, and N142 are each glycosylated (N-linked (GlcNAc...) asparagine). The Cell attachment site motif lies at 261–263 (RGD). Q293 carries the N5-methylglutamine modification. 4 disulfide bridges follow: C307-C316, C315-C378, C344-C409, and C348-C411.

This sequence belongs to the TGF-beta family. Interacts with ASPN. Latency-associated peptide: Homodimer; disulfide-linked. Latency-associated peptide: Interacts with Transforming growth factor beta-3 (TGF-beta-3) chain; interaction is non-covalent and maintains (TGF-beta-3) in a latent state. Latency-associated peptide: Interacts with LRRC32/GARP; leading to regulate activation of TGF-beta-3 and promote epithelial fusion during palate development. Latency-associated peptide: Interacts (via cell attachment site) with integrins, leading to release of the active TGF-beta-3. Transforming growth factor beta-3: Homodimer; disulfide-linked. Transforming growth factor beta-3: Interacts with TGF-beta receptors (TGFBR1 and TGFBR2), leading to signal transduction. Transforming growth factor beta-3 proprotein: The precursor proprotein is cleaved in the Golgi apparatus to form Transforming growth factor beta-3 (TGF-beta-3) and Latency-associated peptide (LAP) chains, which remain non-covalently linked, rendering TGF-beta-3 inactive. In terms of processing, methylated at Gln-293 by N6AMT1.

The protein resides in the secreted. It localises to the extracellular space. Its subcellular location is the extracellular matrix. Transforming growth factor beta-3 proprotein: Precursor of the Latency-associated peptide (LAP) and Transforming growth factor beta-3 (TGF-beta-3) chains, which constitute the regulatory and active subunit of TGF-beta-3, respectively. Functionally, required to maintain the Transforming growth factor beta-3 (TGF-beta-3) chain in a latent state during storage in extracellular matrix. Associates non-covalently with TGF-beta-3 and regulates its activation via interaction with 'milieu molecules', such as LTBP1 and LRRC32/GARP, that control activation of TGF-beta-3. Interaction with integrins results in distortion of the Latency-associated peptide chain and subsequent release of the active TGF-beta-3. In terms of biological role, transforming growth factor beta-3: Multifunctional protein that regulates embryogenesis and cell differentiation and is required in various processes such as secondary palate development. Activation into mature form follows different steps: following cleavage of the proprotein in the Golgi apparatus, Latency-associated peptide (LAP) and Transforming growth factor beta-3 (TGF-beta-3) chains remain non-covalently linked rendering TGF-beta-3 inactive during storage in extracellular matrix. At the same time, LAP chain interacts with 'milieu molecules', such as LTBP1 and LRRC32/GARP that control activation of TGF-beta-3 and maintain it in a latent state during storage in extracellular milieus. TGF-beta-3 is released from LAP by integrins: integrin-binding results in distortion of the LAP chain and subsequent release of the active TGF-beta-3. Once activated following release of LAP, TGF-beta-3 acts by binding to TGF-beta receptors (TGFBR1 and TGFBR2), which transduce signal. The protein is Transforming growth factor beta-3 proprotein (TGFB3) of Homo sapiens (Human).